The primary structure comprises 396 residues: S-adenosylmethionine synthase (396 aa).

Histidine 16 provides a ligand contact to ATP. Aspartate 18 provides a ligand contact to Mg(2+). Glutamate 44 contacts K(+). 2 residues coordinate L-methionine: glutamate 57 and glutamine 100. The segment at 100-110 (QSQDIARGVDN) is flexible loop. ATP is bound by residues 162-164 (DGK), aspartate 237, 243-244 (RK), alanine 260, and lysine 264. Aspartate 237 serves as a coordination point for L-methionine. Lysine 268 provides a ligand contact to L-methionine.

It belongs to the AdoMet synthase family. As to quaternary structure, homotetramer; dimer of dimers. It depends on Mg(2+) as a cofactor. K(+) is required as a cofactor.

The protein resides in the cytoplasm. The enzyme catalyses L-methionine + ATP + H2O = S-adenosyl-L-methionine + phosphate + diphosphate. It functions in the pathway amino-acid biosynthesis; S-adenosyl-L-methionine biosynthesis; S-adenosyl-L-methionine from L-methionine: step 1/1. Functionally, catalyzes the formation of S-adenosylmethionine (AdoMet) from methionine and ATP. The overall synthetic reaction is composed of two sequential steps, AdoMet formation and the subsequent tripolyphosphate hydrolysis which occurs prior to release of AdoMet from the enzyme. The chain is S-adenosylmethionine synthase from Myxococcus xanthus.